Reading from the N-terminus, the 600-residue chain is MKGWNVIVIGGGHAGLEAAWAAAKFSRVALLVGNPATVGRMPCNPAVGGPGKSQLVFEVQALGGLMGRLADDTAIHTRMLNASKGPAVQSLRVQNERDAYAERAQDVIFGHSEIEIVRGEAADLEQDGQGGWVVVTSDGRRLHARSVVLAAGTFMRGVTWYGRQSRPEGRQGEPPSRFLSAPLERGGHVLKRYKTGTPPRVRADSVRFADLLEIPADPQPRGFTGTPGPRAAESPTWQTHTTPQTHALIQENLHESPMYAGDIEGLGPRYCPSIEDKVVKFAHHDRHLLFVEPDGVQTSEVYLQGFSSSLPPRLQDELVRTLPGFEQAVIQRYAYAVEYDVVDSTELTLNLESKKLPGLFTAGQLNGTSGYEEAAAQGLVAGTAAARRSLGLDEQVIGRETSYLGVLLDDLVFKGSDEPYRMMTSRVEHRLLVRQDNADERMTPIGHALGLVDDAELIRVQEKYARVQSGIKSLSKQRMQGQTADAWLRRPELSLADVETLGATLPAELGASEREAVEIRVKYAGYIARAESQLRSEAKARELSLSGVNFAGITALSNEAREKLTRLQPQTVEQASRISGVRHADISALLVHLKGQRVGS.

Position 10–15 (10–15 (GGGHAG)) interacts with FAD. The interval 216–239 (ADPQPRGFTGTPGPRAAESPTWQT) is disordered. Residue 267 to 281 (GPRYCPSIEDKVVKF) coordinates NAD(+).

The protein belongs to the MnmG family. Homodimer. Heterotetramer of two MnmE and two MnmG subunits. FAD is required as a cofactor.

It is found in the cytoplasm. Its function is as follows. NAD-binding protein involved in the addition of a carboxymethylaminomethyl (cmnm) group at the wobble position (U34) of certain tRNAs, forming tRNA-cmnm(5)s(2)U34. The protein is tRNA uridine 5-carboxymethylaminomethyl modification enzyme MnmG of Deinococcus radiodurans (strain ATCC 13939 / DSM 20539 / JCM 16871 / CCUG 27074 / LMG 4051 / NBRC 15346 / NCIMB 9279 / VKM B-1422 / R1).